Reading from the N-terminus, the 194-residue chain is Peptidyl-tRNA hydrolase (194 aa).

Position 16 (Y16) interacts with tRNA. Residue H21 is the Proton acceptor of the active site. TRNA-binding residues include F67, N69, and N115.

Belongs to the PTH family. As to quaternary structure, monomer.

It is found in the cytoplasm. The enzyme catalyses an N-acyl-L-alpha-aminoacyl-tRNA + H2O = an N-acyl-L-amino acid + a tRNA + H(+). In terms of biological role, hydrolyzes ribosome-free peptidyl-tRNAs (with 1 or more amino acids incorporated), which drop off the ribosome during protein synthesis, or as a result of ribosome stalling. Catalyzes the release of premature peptidyl moieties from peptidyl-tRNA molecules trapped in stalled 50S ribosomal subunits, and thus maintains levels of free tRNAs and 50S ribosomes. This Salmonella agona (strain SL483) protein is Peptidyl-tRNA hydrolase.